The primary structure comprises 286 residues: ATP synthase gamma chain (286 aa).

The protein belongs to the ATPase gamma chain family. In terms of assembly, F-type ATPases have 2 components, CF(1) - the catalytic core - and CF(0) - the membrane proton channel. CF(1) has five subunits: alpha(3), beta(3), gamma(1), delta(1), epsilon(1). CF(0) has three main subunits: a, b and c.

The protein resides in the cell inner membrane. In terms of biological role, produces ATP from ADP in the presence of a proton gradient across the membrane. The gamma chain is believed to be important in regulating ATPase activity and the flow of protons through the CF(0) complex. The polypeptide is ATP synthase gamma chain (Shewanella amazonensis (strain ATCC BAA-1098 / SB2B)).